We begin with the raw amino-acid sequence, 394 residues long: Myb-related protein 2 (394 aa).

Residues 42-102 (TDAKPRLKWT…HLQKYRLSKN (61 aa)) enclose the HTH myb-type domain. A DNA-binding region (H-T-H motif) is located at residues 73-98 (PKTIMKVMGIPGLTLYHLKSHLQKYR). The coiled coil stretch occupies residues 148–168 (GEALQMQIEVQRRLHEQLEVQ). The short motif at 161–166 (LHEQLE) is the LHEQLE element. The interval 338 to 363 (LHGHKSQHQQGNNEDHKLETRNRKGM) is disordered. Positions 350–363 (NEDHKLETRNRKGM) are enriched in basic and acidic residues.

It belongs to the MYB-CC family. As to quaternary structure, isoform 1: Homodimer. Isoform 3: Does not form homodimer. As to expression, expressed in phloem and/or cambium.

It is found in the nucleus. Its function is as follows. Transcriptional activator that may activate the transcription of specific genes involved in nitrogen uptake or assimilation. Acts redundantly with MYR1 as a repressor of flowering and organ elongation under decreased light intensity. Represses gibberellic acid (GA)-dependent responses and affects levels of bioactive GA. This chain is Myb-related protein 2, found in Arabidopsis thaliana (Mouse-ear cress).